The chain runs to 132 residues: Small ribosomal subunit protein uS8 (132 aa).

It belongs to the universal ribosomal protein uS8 family. Part of the 30S ribosomal subunit. Contacts proteins S5 and S12.

Functionally, one of the primary rRNA binding proteins, it binds directly to 16S rRNA central domain where it helps coordinate assembly of the platform of the 30S subunit. The polypeptide is Small ribosomal subunit protein uS8 (Streptococcus pyogenes serotype M1).